The following is a 190-amino-acid chain: Threonylcarbamoyl-AMP synthase (190 aa).

The YrdC-like domain occupies 7–190; it reads GDAIAAAIDV…ALTGELFRQG (184 aa).

This sequence belongs to the SUA5 family. TsaC subfamily.

It is found in the cytoplasm. The enzyme catalyses L-threonine + hydrogencarbonate + ATP = L-threonylcarbamoyladenylate + diphosphate + H2O. In terms of biological role, required for the formation of a threonylcarbamoyl group on adenosine at position 37 (t(6)A37) in tRNAs that read codons beginning with adenine. Catalyzes the conversion of L-threonine, HCO(3)(-)/CO(2) and ATP to give threonylcarbamoyl-AMP (TC-AMP) as the acyladenylate intermediate, with the release of diphosphate. This Escherichia coli O1:K1 / APEC protein is Threonylcarbamoyl-AMP synthase.